A 474-amino-acid polypeptide reads, in one-letter code: Coiled-coil domain-containing protein 174 (474 aa).

Disordered regions lie at residues 39 to 86 and 129 to 170; these read GVFG…REKL and GATR…PSEE. 2 stretches are compositionally biased toward basic and acidic residues: residues 64–86 and 129–142; these read RAEK…REKL and GATR…ERDA. A coiled-coil region spans residues 64-98; that stretch reads RAEKDAEQKLEEQKTLDKSREKLEEKAKLYEKMTK. Residues 148–157 show a composition bias toward acidic residues; that stretch reads NDDDDEEEFS. Phosphoserine is present on S206. A coiled-coil region spans residues 276–317; it reads LEMLREQTTDQRIKRENIKEKRKAILEARLAKLRQKKMKKSK. Disordered stretches follow at residues 309 to 372 and 389 to 461; these read RQKK…IREW and ELRA…VTFQ. Composition is skewed to basic and acidic residues over residues 316–327 and 356–372; these read SKVDGTEEESRA and IQER…IREW. Residues 410 to 419 are compositionally biased toward polar residues; sequence RTGSLSSQPW. Low complexity predominate over residues 430-453; that stretch reads GHSSGQSQEPSSSHTSTPASESSP.

It is found in the nucleus. Probably involved in neuronal development. The polypeptide is Coiled-coil domain-containing protein 174 (Ccdc174) (Rattus norvegicus (Rat)).